Here is a 496-residue protein sequence, read N- to C-terminus: MWQIVFLTFGCDLVLASAYNNFRKSVDSTGRRQYQVQNGPCSYTFLLPETDSCRSSSSPYMSNAVQRDAPLDYDDSVQRLQVLENILENNTQWLMKLENYIQDNMKKEMVEIQQNVVQNQTAVMIEIGTSLLNQTAAQTRKLTDVEAQVLNQTTRLELQLLQHSISTNKLEKQILDQTSEINKLQDKNSFLEKKVLDMEDKHSVQLQSMKEQKDQLQVLVSKQSSVIDELEKKLVTATVNNSVLQKQQHDLMETVNSLLTMMSSPDYKSSVAVPKEEKTTFRDCAEIFKSGLTTSGIYTLTFPNSTEEVKAYCDMDMGGGGWTVIQHREDGSVDFQRTWKEYKEGFGSPLGEYWLGNEFVSQLTSGHRYVLKIQLKDWEGSEAHSLYEHFYLSGEESNYRIHLTGLTGTAGKISSISQPGSDFSTKDSDNDKCICKCSQMLTGGWWFDACGPSNLNGQYYPQKQNTNKFNGIKWYYWKGSGYSLKATTMMIRPADF.

The first 18 residues, 1-18 (MWQIVFLTFGCDLVLASA), serve as a signal peptide directing secretion. N-linked (GlcNAc...) asparagine glycosylation is found at Asn89, Asn119, Asn133, Asn151, Asn240, and Asn304. The stretch at 159–256 (QLLQHSISTN…QQHDLMETVN (98 aa)) forms a coiled coil. Residues 280–496 (TFRDCAEIFK…TTMMIRPADF (217 aa)) enclose the Fibrinogen C-terminal domain. An intrachain disulfide couples Cys284 to Cys313. Positions 429, 431, 433, and 435 each coordinate Ca(2+). 2 disulfide bridges follow: Cys433/Cys435 and Cys437/Cys450.

As to quaternary structure, interacts with TEK/TIE2, competing for the same binding site as ANGPT1. Interacts with ITGA5. Interacts with SVEP1/polydom. Interacts with THBD; this interaction significantly inhibits the generation of activated PC and TAFIa/CPB2 by the thrombin/thrombomodulin complex.

The protein localises to the secreted. Functionally, binds to TEK/TIE2, competing for the ANGPT1 binding site, and modulating ANGPT1 signaling. Can induce tyrosine phosphorylation of TEK/TIE2 in the absence of ANGPT1. In the absence of angiogenic inducers, such as VEGF, ANGPT2-mediated loosening of cell-matrix contacts may induce endothelial cell apoptosis with consequent vascular regression. In concert with VEGF, it may facilitate endothelial cell migration and proliferation, thus serving as a permissive angiogenic signal. Involved in the regulation of lymphangiogenesis. This chain is Angiopoietin-2 (Angpt2), found in Rattus norvegicus (Rat).